The following is a 407-amino-acid chain: Cytochrome P450 NovI (407 aa).

Residue Cys-357 participates in heme binding.

Belongs to the cytochrome P450 family. Requires heme as cofactor.

Its pathway is antibiotic biosynthesis; novobiocin biosynthesis. Its function is as follows. Together with NovH, involved in the formation of a beta-OH-Tyr intermediate in the novobiocin biosynthesis pathway, an aminocoumarin family antibiotic that targets bacterial DNA gyrases. Acts as a cytochrome P450-type monooxygenase with specificity for the tyrosyl-S-NovH acyl enzyme (L-Tyr-S-NovH) to form the beta-OH-Tyr intermediate (L-beta-OH-Tyr-S-NovH). This is Cytochrome P450 NovI (novI) from Streptomyces niveus (Streptomyces spheroides).